Here is a 662-residue protein sequence, read N- to C-terminus: UPF0313 protein CPR_1216 (662 aa).

The Radical SAM core domain maps to 296–567 (AIEEVKFSLV…AMQRALLQFK (272 aa)). 3 residues coordinate [4Fe-4S] cluster: C310, C314, and C317. The interval 597 to 662 (RDKNSFGKGN…QRVSKGKKRR (66 aa)) is disordered. Residues 618-632 (SRNENSGRRESEDKK) are compositionally biased toward basic and acidic residues. Over residues 633 to 644 (RSSHSKKQRGNK) the composition is skewed to basic residues.

The protein belongs to the UPF0313 family. Requires [4Fe-4S] cluster as cofactor.

This chain is UPF0313 protein CPR_1216, found in Clostridium perfringens (strain SM101 / Type A).